A 171-amino-acid chain; its full sequence is Adenine phosphoribosyltransferase (171 aa).

It belongs to the purine/pyrimidine phosphoribosyltransferase family. Homodimer.

It localises to the cytoplasm. The enzyme catalyses AMP + diphosphate = 5-phospho-alpha-D-ribose 1-diphosphate + adenine. It participates in purine metabolism; AMP biosynthesis via salvage pathway; AMP from adenine: step 1/1. Functionally, catalyzes a salvage reaction resulting in the formation of AMP, that is energically less costly than de novo synthesis. The chain is Adenine phosphoribosyltransferase from Halalkalibacterium halodurans (strain ATCC BAA-125 / DSM 18197 / FERM 7344 / JCM 9153 / C-125) (Bacillus halodurans).